Reading from the N-terminus, the 205-residue chain is Nitrophorin-4 (205 aa).

An N-terminal signal peptide occupies residues 1 to 21; the sequence is MKSYTSLLAVAILCLFGGVNG. 2 disulfide bridges follow: Cys-23–Cys-143 and Cys-62–Cys-192. His-80 provides a ligand contact to heme.

Belongs to the calycin superfamily. Nitrophorin family. It depends on heme b as a cofactor. In terms of tissue distribution, salivary gland (at protein level).

Its subcellular location is the secreted. The catalysed reaction is 3 nitrite + 2 H(+) = 2 nitric oxide + nitrate + H2O. Its function is as follows. Heme-based protein that delivers nitric oxide gas (NO) to the victim while feeding, resulting in vasodilation and inhibition of platelet aggregation. Reversibly binds nitric oxide (NO). Also binds tightly to histamine, which is released by the host to induce wound healing. NO release is pH dependent and linked to loop dynamics. This Rhodnius prolixus (Triatomid bug) protein is Nitrophorin-4.